Reading from the N-terminus, the 418-residue chain is Creatine kinase U-type, mitochondrial (418 aa).

The N-terminal 39 residues, 1 to 39, are a transit peptide targeting the mitochondrion; the sequence is MAGPFSRLLSARPGLKLLALAGAGSLAAGILLRPESVRA. Residues 40-64 form a cardiolipin-binding region; that stretch reads ATGERRRLYPPSAEYPDLRKHNNCM. The 87-residue stretch at 46–132 folds into the Phosphagen kinase N-terminal domain; the sequence is RLYPPSAEYP…FDPVIQERHN (87 aa). Residue Ser-152 is modified to Phosphoserine. Residues 159–401 enclose the Phosphagen kinase C-terminal domain; it reads YVLSSRVRTG…NYLIDCERRL (243 aa). ATP is bound at residue 162–166; sequence SSRVR. The residue at position 197 (Ser-197) is a Phosphoserine. Position 214 is a phosphothreonine (Thr-214). His-225 serves as a coordination point for ATP. Ser-233 is subject to Phosphoserine. Residues Arg-270, Arg-326, 354–359, and Asp-369 each bind ATP; that span reads RGTGGV. Thr-356 carries the post-translational modification Phosphothreonine.

This sequence belongs to the ATP:guanido phosphotransferase family. In terms of assembly, exists as an octamer composed of four MTCK homodimers. In many tissues, with highest levels in brain gut and kidney. In the kidney localized primarily in the outer medulla in the thick ascending limb and distal convoluted tubule.

It is found in the mitochondrion inner membrane. The catalysed reaction is creatine + ATP = N-phosphocreatine + ADP + H(+). Functionally, reversibly catalyzes the transfer of phosphate between ATP and various phosphogens (e.g. creatine phosphate). Creatine kinase isoenzymes play a central role in energy transduction in tissues with large, fluctuating energy demands, such as skeletal muscle, heart, brain and spermatozoa. The sequence is that of Creatine kinase U-type, mitochondrial (Ckmt1) from Rattus norvegicus (Rat).